The chain runs to 76 residues: MQTAYWVMVMMMVWIAAPLSEGGKLNDVIRGLVPDDITPQLILGSLISRRQSEEGGSNATKKPYILRASDQVASGP.

The first 22 residues, 1–22, serve as a signal peptide directing secretion; it reads MQTAYWVMVMMMVWIAAPLSEG. Positions 23 to 50 are excised as a propeptide; the sequence is GKLNDVIRGLVPDDITPQLILGSLISRR. Gln-51 is modified (pyrrolidone carboxylic acid). The interval 51–76 is disordered; that stretch reads QSEEGGSNATKKPYILRASDQVASGP. The O-linked (GalNAc...) threonine glycan is linked to Thr-60. A propeptide spanning residues 67 to 76 is cleaved from the precursor; sequence RASDQVASGP.

The protein belongs to the conotoxin C superfamily. Post-translationally, O-glycosylated. The glycosylation seems to enhance the affinity to the neurotensin receptors. In terms of tissue distribution, expressed by the venom duct.

It is found in the secreted. In terms of biological role, acts as an agonist of neurotensin receptors. It binds to human neurotensin type 1 receptor (NTSR1), rat neurotensin types 1 and 2 receptors (NTSR1/NTSR2) and mouse neurotensin type 3 receptor (SORT1). The protein is Contulakin-G of Conus geographus (Geography cone).